A 599-amino-acid polypeptide reads, in one-letter code: MTMTLHTKASGMALLHQIQGNELEPLNRPQLKMPMERALGEVYVDNSKPTVFNYPEGAAYEFNAAAAAAAAASAPVYGQSGIAYGPGSEAAAFSANSLGAFPQLNSVSPSPLMLLHPPPQLSPFLHPHGQQVPYYLENEPSAYAVRDTGPPAFYRSNSDNRRQNGRERLSSSNEKGNMIMESAKETRYCAVCNDYASGYHYGVWSCEGCKAFFKRSIQGHNDYMCPATNQCTIDKNRRKSCQACRLRKCYEVGMMKGGIRKDRRGGRMLKHKRQRDDLEGRNEMGASGDMRAANLWPSPLVIKHTKKNSPALSLTADQMVSALLDAEPPMIYSEYDPSRPFSEASMMGLLTNLADRELVHMINWAKRVPGFGDLNLHDQVHLLECAWLEILMIGLVWRSMEHPGKLLFAPNLLLDRNQGKCVEGMVEIFDMLLATSSRFRMMNLQGEEFVCLKSIILLNSGVYTFLSSTLKSLEEKDHIHRVLDKITDTLIHLMAKAGLTLQQQHRRLAQLLLILSHIRHMSNKGMEHLYNMKCKNVVPLYDLLLEMLDAHRLHAPASRMGVPPEEPSQTQLATTSSTSAHSLQTYYIPPEAEGFPNTI.

Residues 1-188 (MTMTLHTKAS…IMESAKETRY (188 aa)) form a modulating (transactivation AF-1); mediates interaction with MACROD1 region. O-linked (GlcNAc) serine glycosylation is present at Ser10. The required for interaction with NCOA1 stretch occupies residues 35–47 (MERALGEVYVDNS). Positions 35-178 (MERALGEVYV…LSSSNEKGNM (144 aa)) are interaction with DDX5; self-association. A glycan (O-linked (GlcNAc) threonine) is linked at Thr50. Phosphoserine; by CDK2 occurs at positions 108 and 110. The residue at position 122 (Ser122) is a Phosphoserine. The disordered stretch occupies residues 147 to 175 (DTGPPAFYRSNSDNRRQNGRERLSSSNEK). Basic and acidic residues predominate over residues 158–169 (SDNRRQNGRERL). Residue Ser171 is modified to Phosphoserine; by CK2. NR C4-type zinc fingers lie at residues 189-209 (CAVC…CEGC) and 225-249 (CPAT…LRKC). The nuclear receptor DNA-binding region spans 189-254 (CAVCNDYASG…RLRKCYEVGM (66 aa)). The interval 189–314 (CAVCNDYASG…TKKNSPALSL (126 aa)) is mediates interaction with DNTTIP2. Positions 255 to 314 (MKGGIRKDRRGGRMLKHKRQRDDLEGRNEMGASGDMRAANLWPSPLVIKHTKKNSPALSL) are hinge. Arg264 carries the asymmetric dimethylarginine; by PRMT1 modification. The interaction with AKAP13 stretch occupies residues 266-599 (GRMLKHKRQR…PEAEGFPNTI (334 aa)). The segment at 268–599 (MLKHKRQRDD…PEAEGFPNTI (332 aa)) is self-association. Residues 315 to 551 (TADQMVSALL…DLLLEMLDAH (237 aa)) form the NR LBD domain. Residues 315–599 (TADQMVSALL…PEAEGFPNTI (285 aa)) form a transactivation AF-2 region. Residues Glu357 and Arg398 each contribute to the 17beta-estradiol site. Cys451 carries the S-palmitoyl cysteine lipid modification. Residue His528 coordinates 17beta-estradiol. Tyr541 is subject to Phosphotyrosine; by Tyr-kinases. The tract at residues 557 to 581 (ASRMGVPPEEPSQTQLATTSSTSAH) is disordered. Over residues 568-581 (SQTQLATTSSTSAH) the composition is skewed to low complexity. The O-linked (GlcNAc) threonine glycan is linked to Thr575.

This sequence belongs to the nuclear hormone receptor family. NR3 subfamily. As to quaternary structure, interacts with BCAS3. Binds DNA as a homodimer. Can form a heterodimer with ESR2. Interacts with coactivator NCOA5. Interacts with PELP1, the interaction is enhanced by 17-beta-estradiol; the interaction increases ESR1 transcriptional activity. Interacts with NCOA7; the interaction is ligand-inducible. Interacts with AKAP13, CUEDC2, HEXIM1, KDM5A, MAP1S, SMARD1, and UBE1C. Interacts with MUC1; the interaction is stimulated by 7 beta-estradiol (E2) and enhances ESR1-mediated transcription. Interacts with DNTTIP2, and UIMC1. Interacts with KMT2D/MLL2. Interacts with ATAD2; the interaction is enhanced by estradiol. Interacts with KIF18A and LDB1. Interacts with RLIM (via its C-terminus). Interacts with MACROD1. Interacts with SH2D4A and PLCG. Interacts with SH2D4A; the interaction blocks binding to PLCG and inhibits estrogen-induced cell proliferation. Interacts with DYNLL1. Interacts with CCDC62; the interaction requires estradiol and appears to enhance the transcription of target genes. Interacts with NR2C1; the interaction prevents homodimerization of ESR1 and suppresses its transcriptional activity and cell growth. Interacts with DNAAF4. Interacts with PRMT2. Interacts with RBFOX2. Interacts with EP300; the interaction is estrogen-dependent and enhanced by CITED1. Interacts with CITED1; the interaction is estrogen-dependent. Interacts with FAM120B, FOXL2, PHB2 and SLC30A9. Interacts with coactivators NCOA3 and NCOA6. Interacts with STK3/MST2 only in the presence of SAV1 and vice-versa. Binds to CSNK1D. Interacts with NCOA2; NCOA2 can interact with ESR1 AF-1 and AF-2 domains simultaneously and mediate their transcriptional synergy. Interacts with DDX5. Interacts with NCOA1; the interaction seems to require a self-association of N-terminal and C-terminal regions. Interacts with ZNF366, DDX17, NFKB1, RELA, SP1 and SP3. Interacts with NRIP1. Interacts with GPER1; the interaction occurs in an estrogen-dependent manner. Interacts with CLOCK and the interaction is stimulated by estrogen. Interacts with BCAS3. Interacts with TRIP4 (ufmylated); estrogen dependent. Interacts with LMTK3; the interaction phosphorylates ESR1 (in vitro) and protects it against proteasomal degradation. Interacts with CCAR2 (via N-terminus) in a ligand-independent manner. Interacts with ZFHX3. Interacts with SFR1 in a ligand-dependent and -independent manner. Interacts with DCAF13, LATS1 and DCAF1; regulates ESR1 ubiquitination and ubiquitin-mediated proteasomal degradation. Interacts (via DNA-binding domain) with POU4F2 isoform 2 (C-terminus); this interaction increases the estrogen receptor ESR1 transcriptional activity in a DNA- and ligand 17-beta-estradiol-independent manner. Interacts with ESRRB isoform 1. Interacts with UBE3A and WBP2. Interacts with GTF2B. Interacts with RBM39. In the absence of hormonal ligand, interacts with TACC1. Interacts with PI3KR1 or PI3KR2 and PTK2/FAK1. Interacts with SRC. Interacts with BAG1; the interaction is promoted in the absence of estradiol (17-beta-estradiol/E2). Interacts with and ubiquitinated by STUB1; the interaction is promoted in the absence of estradiol (17-beta-estradiol/E2). Interacts with NEDD8. In terms of processing, phosphorylated by cyclin A/CDK2 and CK1. Phosphorylation probably enhances transcriptional activity. Dephosphorylation at Ser-122 by PPP5C inhibits its transactivation activity. Phosphorylated by LMTK3 (in vitro). Post-translationally, ubiquitinated. Deubiquitinated by OTUB1. Palmitoylated at Cys-451 by ZDHHC7 and ZDHHC21. This modification is required for plasma membrane targeting and for rapid intracellular signaling via ERK and AKT kinases and cAMP generation, but not for signaling mediated by the nuclear hormone receptor. In terms of processing, ubiquitinated; regulated by LATS1 via DCAF1 it leads to ESR1 proteasomal degradation. Deubiquitinated by OTUB1. Ubiquitinated by STUB1/CHIP; in the CA1 hippocampal region following loss of endogenous circulating estradiol (17-beta-estradiol/E2). Ubiquitinated by UBR5, leading to its degradation: UBR5 specifically recognizes and binds ligand-bound ESR1 when it is not associated with coactivators (NCOAs). In presence of NCOAs, the UBR5-degron is not accessible, preventing its ubiquitination and degradation. Post-translationally, dimethylated by PRMT1 at Arg-264. The methylation may favor cytoplasmic localization. Demethylated by JMJD6 at Arg-264.

The protein localises to the nucleus. It localises to the cytoplasm. It is found in the golgi apparatus. The protein resides in the cell membrane. Functionally, nuclear hormone receptor. The steroid hormones and their receptors are involved in the regulation of eukaryotic gene expression and affect cellular proliferation and differentiation in target tissues. Ligand-dependent nuclear transactivation involves either direct homodimer binding to a palindromic estrogen response element (ERE) sequence or association with other DNA-binding transcription factors, such as AP-1/c-Jun, c-Fos, ATF-2, Sp1 and Sp3, to mediate ERE-independent signaling. Ligand binding induces a conformational change allowing subsequent or combinatorial association with multiprotein coactivator complexes through LXXLL motifs of their respective components. Mutual transrepression occurs between the estrogen receptor (ER) and NF-kappa-B in a cell-type specific manner. Decreases NF-kappa-B DNA-binding activity and inhibits NF-kappa-B-mediated transcription from the IL6 promoter and displace RELA/p65 and associated coregulators from the promoter. Recruited to the NF-kappa-B response element of the CCL2 and IL8 promoters and can displace CREBBP. Present with NF-kappa-B components RELA/p65 and NFKB1/p50 on ERE sequences. Can also act synergistically with NF-kappa-B to activate transcription involving respective recruitment adjacent response elements; the function involves CREBBP. Can activate the transcriptional activity of TFF1. Also mediates membrane-initiated estrogen signaling involving various kinase cascades. Essential for MTA1-mediated transcriptional regulation of BRCA1 and BCAS3. Maintains neuronal survival in response to ischemic reperfusion injury when in the presence of circulating estradiol (17-beta-estradiol/E2). This Mus musculus (Mouse) protein is Estrogen receptor (Esr1).